Reading from the N-terminus, the 260-residue chain is Indole-3-glycerol phosphate synthase (260 aa).

Belongs to the TrpC family.

The catalysed reaction is 1-(2-carboxyphenylamino)-1-deoxy-D-ribulose 5-phosphate + H(+) = (1S,2R)-1-C-(indol-3-yl)glycerol 3-phosphate + CO2 + H2O. It participates in amino-acid biosynthesis; L-tryptophan biosynthesis; L-tryptophan from chorismate: step 4/5. The chain is Indole-3-glycerol phosphate synthase from Desulfotalea psychrophila (strain LSv54 / DSM 12343).